Here is a 341-residue protein sequence, read N- to C-terminus: Major histocompatibility complex class I-related protein 1 (341 aa).

Residues 1–18 (MMLLLPLLAVFLVKRSHT) form the signal peptide. An alpha-1 region spans residues 19–105 (RTHSLRYFRL…RHLQRHYNHS (87 aa)). The interval 19–197 (RTHSLRYFRL…EYGRDTLERT (179 aa)) is antigen-binding cleft. Residues 19 to 296 (RTHSLRYFRL…APRESGDILR (278 aa)) lie on the Extracellular side of the membrane. The 8-(9H-purin-6-yl)-2-oxa-8-azabicyclo[3.3.1]nona-3,6-diene-4,6-dicarbaldehyde site is built by Tyr25 and Arg27. The 5-(2-oxoethylideneamino)-6-(D-ribitylamino)uracil site is built by Arg27, Ser42, and Lys61. 5-(2-oxopropylideneamino)-6-(D-ribitylamino)uracil-binding residues include Arg27, Ser42, and Lys61. Arg27, Ser42, and Lys61 together coordinate 7-hydroxy-6-methyl-8-(1-D-ribityl)lumazine. Positions 61 and 76 each coordinate 8-(9H-purin-6-yl)-2-oxa-8-azabicyclo[3.3.1]nona-3,6-diene-4,6-dicarbaldehyde. Residue Lys61 coordinates 2-amino-4-oxopteridine-6-carbaldehyde. Position 61 (Lys61) interacts with pyridoxal. N-linked (GlcNAc...) asparagine glycosylation is present at Asn103. Residues 106–197 (GLHTYQRMIG…EYGRDTLERT (92 aa)) are alpha-2. Arg112 is a binding site for 8-(9H-purin-6-yl)-2-oxa-8-azabicyclo[3.3.1]nona-3,6-diene-4,6-dicarbaldehyde. 5-(2-oxoethylideneamino)-6-(D-ribitylamino)uracil is bound by residues Arg112, Tyr170, and Gln171. Arg112, Tyr170, and Gln171 together coordinate 5-(2-oxopropylideneamino)-6-(D-ribitylamino)uracil. Arg112, Tyr170, and Gln171 together coordinate 7-hydroxy-6-methyl-8-(1-D-ribityl)lumazine. Intrachain disulfides connect Cys116–Cys179 and Cys218–Cys274. An alpha-3 region spans residues 198–289 (EHPVVRTTRK…GRQMVLEAPR (92 aa)). Residues 200–301 (PVVRTTRKET…GDILRVSTIS (102 aa)) enclose the Ig-like C1-type domain. Positions 290–296 (ESGDILR) are connecting peptide. The helical transmembrane segment at 297–317 (VSTISGTTILIIALAGVGVLI) threads the bilayer. Topologically, residues 318-341 (WRRSQELKEVMYQPTQVNEGSSPS) are cytoplasmic.

The protein belongs to the MHC class I family. As to quaternary structure, heterotrimer that consists of MR1, B2M and metabolite antigen. Major classes of metabolite ligands presented by MR1 include riboflavin-related antigens, pyrimidines and ribityl lumazines, nucleobase adducts and folate derivatives. Forms reversible covalent Schiff base complexes with microbial pyrimidine-based metabolite, which serves as a molecular switch triggering complete folding, stable association with B2M and translocation of the ternary complex from endoplasmic reticulum to the plasma membrane. Alternatively, forms non-Schiff base complexes with ribityl lumazines. On antigen-presenting cells, the ternary complex interacts with TCR on MR1-restricted CD4- or CD8-positive T cell subsets. Interacts with TAPBP and TAPBPL chaperones in the endoplasmic reticulum. TAPBP associated or not with MHC class I peptide loading complex binds ligand-free MR1 or MR1-B2M complex, providing for stable MR1 pools ready for metabolite antigen processing. TAPBPL interacts with MR1 in a ligand-independent way; this interaction may stabilize MR1 pool and facilitate ligand loading and dissociation. Structurally, MR1-B2M heterodimer adopts a topology similar to classical MHC class I molecules, with alpha-1 and alpha-2 domains of MR1 forming the antigen-binding cleft composed of two alpha-helices resting on a floor of 7-stranded anti-parallel beta-pleated sheet. In terms of processing, N-glycosylated. In terms of tissue distribution, highly expressed thymus. Expressed in liver, kidney, spleen, heart, brain, lung, skeletal muscle and testis.

It is found in the cell membrane. The protein localises to the endoplasmic reticulum membrane. The protein resides in the golgi apparatus membrane. It localises to the early endosome membrane. Its subcellular location is the late endosome membrane. Antigen-presenting molecule specialized in displaying microbial pyrimidine-based metabolites to alpha-beta T cell receptors (TCR) on innate-type mucosal-associated invariant T (MAIT) cells. In complex with B2M preferentially presents riboflavin-derived metabolites to semi-invariant TRAV1 TCRs on MAIT cells, guiding immune surveillance of the microbial metabolome at mucosal epithelial barriers. Signature pyrimidine-based microbial antigens are generated via non-enzymatic condensation of metabolite intermediates of the riboflavin pathway with by-products arising from other metabolic pathways such as glycolysis. Typical potent antigenic metabolites are 5-(2-oxoethylideneamino)-6-D-ribitylaminouracil (5-OE-RU) and 5-(2-oxopropylideneamino)-6-D-ribitylaminouracil (5-OP-RU), products of condensation of 5-amino-6-D-ribityaminouracil (5-A-RU) with glyoxal or methylglyoxal by-products, respectively. May present microbial antigens to various TRAV1-negative MAIT cell subsets, providing for unique recognition of diverse microbes, including pathogens that do not synthesize riboflavin. Upon antigen recognition, elicits rapid innate-type MAIT cell activation to eliminate pathogenic microbes by directly killing infected cells. During T cell development, drives thymic selection and post-thymic terminal differentiation of MAIT cells in a process dependent on commensal microflora. Acts as an immune sensor of cancer cell metabolome. May present a tumor-specific or -associated metabolite essential for cancer cell survival to a pan-cancer TCR on a non-MAIT CD8-positive T cell clone, triggering T cell-mediated killing of a wide range of cancer cell types. May present tumor-enriched pyridoxal and pyridoxal 5'-phosphate antigens, enabling preferential recognition of cancer cells. Presents nucleobase carbonyl adducts generated during oxidative stress. Captures M3Ade, a nucleobase adduct composed of one adenine modified by a malondialdehyde trimer, for recognition by MR1-restricted T cell clones expressing a polyclonal TCR repertoire. In Mus musculus (Mouse), this protein is Major histocompatibility complex class I-related protein 1.